The following is a 561-amino-acid chain: Phosphoinositide phospholipase C 1 (561 aa).

The 34-residue stretch at Glu-21–Glu-54 folds into the EF-hand domain. The PI-PLC X-box domain occupies Gln-105 to Lys-249. Residues His-120 and His-166 contribute to the active site. Residues Gln-256–Asp-266 are compositionally biased toward polar residues. Residues Gln-256–Asp-285 are disordered. Positions Glu-267–Asp-276 are enriched in basic and acidic residues. One can recognise a PI-PLC Y-box domain in the interval Arg-294–Leu-410. The 128-residue stretch at Pro-414–Asp-541 folds into the C2 domain. The Ca(2+) site is built by Asp-452, Asp-458, Asp-510, Asp-512, and Asp-518.

The cofactor is Ca(2+). In terms of tissue distribution, expressed in stems, leaves, roots, flowers and siliques. Predominant in the vascular tissues of roots and leaves.

Its subcellular location is the cell membrane. It carries out the reaction a 1,2-diacyl-sn-glycero-3-phospho-(1D-myo-inositol-4,5-bisphosphate) + H2O = 1D-myo-inositol 1,4,5-trisphosphate + a 1,2-diacyl-sn-glycerol + H(+). Functionally, the production of the second messenger molecules diacylglycerol (DAG) and inositol 1,4,5-trisphosphate (IP3) is mediated by activated phosphatidylinositol-specific phospholipase C enzymes. Required for secondary responses to abscisic acid signals. The protein is Phosphoinositide phospholipase C 1 (PLC1) of Arabidopsis thaliana (Mouse-ear cress).